The chain runs to 413 residues: Serine/threonine transporter SstT (413 aa).

Helical transmembrane passes span isoleucine 11–alanine 31, phenylalanine 43–leucine 63, isoleucine 82–phenylalanine 102, alanine 141–methionine 161, isoleucine 192–glycine 212, leucine 216–valine 236, methionine 298–isoleucine 318, alanine 339–isoleucine 359, and valine 363–threonine 383.

The protein belongs to the dicarboxylate/amino acid:cation symporter (DAACS) (TC 2.A.23) family.

Its subcellular location is the cell inner membrane. It catalyses the reaction L-serine(in) + Na(+)(in) = L-serine(out) + Na(+)(out). It carries out the reaction L-threonine(in) + Na(+)(in) = L-threonine(out) + Na(+)(out). Involved in the import of serine and threonine into the cell, with the concomitant import of sodium (symport system). The sequence is that of Serine/threonine transporter SstT from Shewanella frigidimarina (strain NCIMB 400).